A 288-amino-acid chain; its full sequence is 4-hydroxy-3-methylbut-2-enyl diphosphate reductase (288 aa).

Residue Cys-12 coordinates [4Fe-4S] cluster. His-42 and His-77 together coordinate (2E)-4-hydroxy-3-methylbut-2-enyl diphosphate. Residues His-42 and His-77 each coordinate dimethylallyl diphosphate. Residues His-42 and His-77 each coordinate isopentenyl diphosphate. Cys-99 is a binding site for [4Fe-4S] cluster. His-127 contributes to the (2E)-4-hydroxy-3-methylbut-2-enyl diphosphate binding site. His-127 is a dimethylallyl diphosphate binding site. His-127 lines the isopentenyl diphosphate pocket. Glu-129 acts as the Proton donor in catalysis. Thr-165 provides a ligand contact to (2E)-4-hydroxy-3-methylbut-2-enyl diphosphate. Cys-193 provides a ligand contact to [4Fe-4S] cluster. (2E)-4-hydroxy-3-methylbut-2-enyl diphosphate-binding residues include Ser-221, Ser-222, Asn-223, and Ser-265. Ser-221, Ser-222, Asn-223, and Ser-265 together coordinate dimethylallyl diphosphate. The isopentenyl diphosphate site is built by Ser-221, Ser-222, Asn-223, and Ser-265.

This sequence belongs to the IspH family. Requires [4Fe-4S] cluster as cofactor.

The catalysed reaction is isopentenyl diphosphate + 2 oxidized [2Fe-2S]-[ferredoxin] + H2O = (2E)-4-hydroxy-3-methylbut-2-enyl diphosphate + 2 reduced [2Fe-2S]-[ferredoxin] + 2 H(+). The enzyme catalyses dimethylallyl diphosphate + 2 oxidized [2Fe-2S]-[ferredoxin] + H2O = (2E)-4-hydroxy-3-methylbut-2-enyl diphosphate + 2 reduced [2Fe-2S]-[ferredoxin] + 2 H(+). Its pathway is isoprenoid biosynthesis; dimethylallyl diphosphate biosynthesis; dimethylallyl diphosphate from (2E)-4-hydroxy-3-methylbutenyl diphosphate: step 1/1. It participates in isoprenoid biosynthesis; isopentenyl diphosphate biosynthesis via DXP pathway; isopentenyl diphosphate from 1-deoxy-D-xylulose 5-phosphate: step 6/6. Functionally, catalyzes the conversion of 1-hydroxy-2-methyl-2-(E)-butenyl 4-diphosphate (HMBPP) into a mixture of isopentenyl diphosphate (IPP) and dimethylallyl diphosphate (DMAPP). Acts in the terminal step of the DOXP/MEP pathway for isoprenoid precursor biosynthesis. This chain is 4-hydroxy-3-methylbut-2-enyl diphosphate reductase, found in Caldanaerobacter subterraneus subsp. tengcongensis (strain DSM 15242 / JCM 11007 / NBRC 100824 / MB4) (Thermoanaerobacter tengcongensis).